The sequence spans 154 residues: uncharacterized protein (154 aa).

Residues 1-33 form the signal peptide; the sequence is MTKRGIQAFAGGIILATAVLAAVFYLTDEDQAA.

This is an uncharacterized protein from Bacillus subtilis (strain 168).